We begin with the raw amino-acid sequence, 315 residues long: Transcription antitermination protein NusB (315 aa).

The tract at residues 296–315 (SANFDTKSAELNDADEKSQD) is disordered. Positions 302–315 (KSAELNDADEKSQD) are enriched in basic and acidic residues.

Belongs to the NusB family.

In terms of biological role, involved in transcription antitermination. Required for transcription of ribosomal RNA (rRNA) genes. Binds specifically to the boxA antiterminator sequence of the ribosomal RNA (rrn) operons. The protein is Transcription antitermination protein NusB of Psychrobacter cryohalolentis (strain ATCC BAA-1226 / DSM 17306 / VKM B-2378 / K5).